Consider the following 359-residue polypeptide: Phospho-N-acetylmuramoyl-pentapeptide-transferase (359 aa).

10 consecutive transmembrane segments (helical) span residues 26–46, 73–93, 98–118, 134–154, 166–186, 197–217, 234–254, 261–281, 286–306, and 338–358; these read TIYGGLTAFLICFLLGPWVIN, TMGGILILFSLGVSTLLWADL, ILITLLSMLLFGAIGFIDDYL, FLVQIMAGLVISYLVYLCPDF, FTPDLGIWYIPFATLVIVGTS, GLAIGPIIIAGVTYMIFAYVA, CGEITIVCGILAGAGLGFLWF, VFMGDTGSIPLGAILGTIAVI, ILLLVVGGLFVIEALSVIIQV, and IVRFWIIAITLALISLSTLKI.

This sequence belongs to the glycosyltransferase 4 family. MraY subfamily. It depends on Mg(2+) as a cofactor.

The protein resides in the cell inner membrane. The catalysed reaction is UDP-N-acetyl-alpha-D-muramoyl-L-alanyl-gamma-D-glutamyl-meso-2,6-diaminopimeloyl-D-alanyl-D-alanine + di-trans,octa-cis-undecaprenyl phosphate = di-trans,octa-cis-undecaprenyl diphospho-N-acetyl-alpha-D-muramoyl-L-alanyl-D-glutamyl-meso-2,6-diaminopimeloyl-D-alanyl-D-alanine + UMP. It functions in the pathway cell wall biogenesis; peptidoglycan biosynthesis. Its function is as follows. Catalyzes the initial step of the lipid cycle reactions in the biosynthesis of the cell wall peptidoglycan: transfers peptidoglycan precursor phospho-MurNAc-pentapeptide from UDP-MurNAc-pentapeptide onto the lipid carrier undecaprenyl phosphate, yielding undecaprenyl-pyrophosphoryl-MurNAc-pentapeptide, known as lipid I. This is Phospho-N-acetylmuramoyl-pentapeptide-transferase from Desulforapulum autotrophicum (strain ATCC 43914 / DSM 3382 / VKM B-1955 / HRM2) (Desulfobacterium autotrophicum).